A 1529-amino-acid chain; its full sequence is Mediator of RNA polymerase II transcription subunit 1.1 (1529 aa).

Disordered stretches follow at residues 685-740 (PDAA…VVGE), 807-919 (QYRM…MRDN), and 933-1529 (PDIE…IDDE). Residues 693 to 702 (GKQRKPRAKK) show a composition bias toward basic residues. 2 stretches are compositionally biased toward low complexity: residues 722 to 739 (GAAA…GVVG) and 807 to 828 (QYRM…PQQQ). Over residues 894–905 (TPSPLSAPPKPF) the composition is skewed to pro residues. Positions 908–919 (EQHHFGTKMRDN) are enriched in basic and acidic residues. Composition is skewed to low complexity over residues 958–990 (SSSS…TAQT) and 1008–1023 (QEQA…IQQQ). A coiled-coil region spans residues 1008 to 1032 (QEQALQKQEQQRIQQQDSVDSTNSE). 3 stretches are compositionally biased toward polar residues: residues 1051-1061 (NQVNRVMNMSN), 1068-1089 (GSST…STGS), and 1096-1105 (TPGTSSNIAQ). 4 stretches are compositionally biased toward basic and acidic residues: residues 1113-1130 (LKKE…EKLI), 1137-1185 (LKVD…ERDK), 1192-1240 (RDRT…KELS), and 1262-1278 (PKKD…KDES). Residues 1169–1202 (EKEDKSQREKDKKERDKERKRRDRDRTEAKKEKD) adopt a coiled-coil conformation. Over residues 1279-1288 (IPGPSTSSES) the composition is skewed to low complexity. The segment covering 1289-1304 (STRKEVAPAPISRKES) has biased composition (basic and acidic residues). Low complexity predominate over residues 1349–1365 (SYSGSSNAGPISSSSRG). 2 stretches are compositionally biased toward pro residues: residues 1375–1386 (PVLPPPALPMRG) and 1477–1500 (QPPP…APPS).

Belongs to the Mediator complex subunit 1 family. Component of the Mediator complex.

The protein resides in the nucleus. In terms of biological role, component of the Mediator complex, a coactivator involved in the regulated transcription of nearly all RNA polymerase II-dependent genes. Mediator functions as a bridge to convey information from gene-specific regulatory proteins to the basal RNA polymerase II transcription machinery. Mediator is recruited to promoters by direct interactions with regulatory proteins and serves as a scaffold for the assembly of a functional preinitiation complex with RNA polymerase II and the general transcription factors. This Caenorhabditis briggsae protein is Mediator of RNA polymerase II transcription subunit 1.1 (sop-3).